We begin with the raw amino-acid sequence, 466 residues long: Methylenetetrahydrofolate--tRNA-(uracil-5-)-methyltransferase TrmFO (466 aa).

Residue 14–19 participates in FAD binding; sequence GGGLAG.

Belongs to the MnmG family. TrmFO subfamily. FAD is required as a cofactor.

It is found in the cytoplasm. The enzyme catalyses uridine(54) in tRNA + (6R)-5,10-methylene-5,6,7,8-tetrahydrofolate + NADH + H(+) = 5-methyluridine(54) in tRNA + (6S)-5,6,7,8-tetrahydrofolate + NAD(+). It catalyses the reaction uridine(54) in tRNA + (6R)-5,10-methylene-5,6,7,8-tetrahydrofolate + NADPH + H(+) = 5-methyluridine(54) in tRNA + (6S)-5,6,7,8-tetrahydrofolate + NADP(+). Its function is as follows. Catalyzes the folate-dependent formation of 5-methyl-uridine at position 54 (M-5-U54) in all tRNAs. The sequence is that of Methylenetetrahydrofolate--tRNA-(uracil-5-)-methyltransferase TrmFO from Brucella suis (strain ATCC 23445 / NCTC 10510).